Consider the following 238-residue polypeptide: UPF0758 protein Dtpsy_2777 (238 aa).

The 123-residue stretch at 116–238 (VFDSPQAVQH…ALSMAEQGLV (123 aa)) folds into the MPN domain. Zn(2+) is bound by residues His187, His189, and Asp200. The JAMM motif signature appears at 187–200 (HNHPSGSVQPSRAD).

It belongs to the UPF0758 family.

The polypeptide is UPF0758 protein Dtpsy_2777 (Acidovorax ebreus (strain TPSY) (Diaphorobacter sp. (strain TPSY))).